Reading from the N-terminus, the 179-residue chain is Large ribosomal subunit protein uL5 (179 aa).

It belongs to the universal ribosomal protein uL5 family. Part of the 50S ribosomal subunit; part of the 5S rRNA/L5/L18/L25 subcomplex. Contacts the 5S rRNA and the P site tRNA. Forms a bridge to the 30S subunit in the 70S ribosome.

In terms of biological role, this is one of the proteins that bind and probably mediate the attachment of the 5S RNA into the large ribosomal subunit, where it forms part of the central protuberance. In the 70S ribosome it contacts protein S13 of the 30S subunit (bridge B1b), connecting the 2 subunits; this bridge is implicated in subunit movement. Contacts the P site tRNA; the 5S rRNA and some of its associated proteins might help stabilize positioning of ribosome-bound tRNAs. The polypeptide is Large ribosomal subunit protein uL5 (Vibrio atlanticus (strain LGP32) (Vibrio splendidus (strain Mel32))).